We begin with the raw amino-acid sequence, 122 residues long: Large ribosomal subunit protein bL12 (122 aa).

Belongs to the bacterial ribosomal protein bL12 family. Homodimer. Part of the ribosomal stalk of the 50S ribosomal subunit. Forms a multimeric L10(L12)X complex, where L10 forms an elongated spine to which 2 to 4 L12 dimers bind in a sequential fashion. Binds GTP-bound translation factors.

Its function is as follows. Forms part of the ribosomal stalk which helps the ribosome interact with GTP-bound translation factors. Is thus essential for accurate translation. In Actinobacillus pleuropneumoniae serotype 5b (strain L20), this protein is Large ribosomal subunit protein bL12.